The chain runs to 130 residues: Small ribosomal subunit protein uS9 (130 aa).

It belongs to the universal ribosomal protein uS9 family.

This Bordetella parapertussis (strain 12822 / ATCC BAA-587 / NCTC 13253) protein is Small ribosomal subunit protein uS9.